Reading from the N-terminus, the 463-residue chain is Phosphomethylpyrimidine synthase (463 aa).

Residues asparagine 80, methionine 109, tyrosine 138, histidine 173, 193–195, 234–237, and glutamate 273 contribute to the substrate site; these read SRG and DGLR. Histidine 277 lines the Zn(2+) pocket. Tyrosine 300 is a binding site for substrate. Residue histidine 341 participates in Zn(2+) binding. Residues cysteine 421, cysteine 424, and cysteine 429 each contribute to the [4Fe-4S] cluster site.

It belongs to the ThiC family. Homodimer. The cofactor is [4Fe-4S] cluster.

The catalysed reaction is 5-amino-1-(5-phospho-beta-D-ribosyl)imidazole + S-adenosyl-L-methionine = 4-amino-2-methyl-5-(phosphooxymethyl)pyrimidine + CO + 5'-deoxyadenosine + formate + L-methionine + 3 H(+). It functions in the pathway cofactor biosynthesis; thiamine diphosphate biosynthesis. In terms of biological role, catalyzes the synthesis of the hydroxymethylpyrimidine phosphate (HMP-P) moiety of thiamine from aminoimidazole ribotide (AIR) in a radical S-adenosyl-L-methionine (SAM)-dependent reaction. The protein is Phosphomethylpyrimidine synthase of Anaeromyxobacter dehalogenans (strain 2CP-1 / ATCC BAA-258).